Reading from the N-terminus, the 169-residue chain is Peptide deformylase (169 aa).

Fe cation contacts are provided by Cys93 and His135. Glu136 is a catalytic residue. His139 is a binding site for Fe cation.

The protein belongs to the polypeptide deformylase family. Requires Fe(2+) as cofactor.

The enzyme catalyses N-terminal N-formyl-L-methionyl-[peptide] + H2O = N-terminal L-methionyl-[peptide] + formate. Functionally, removes the formyl group from the N-terminal Met of newly synthesized proteins. Requires at least a dipeptide for an efficient rate of reaction. N-terminal L-methionine is a prerequisite for activity but the enzyme has broad specificity at other positions. The protein is Peptide deformylase of Aquifex aeolicus (strain VF5).